We begin with the raw amino-acid sequence, 335 residues long: Urokinase plasminogen activator surface receptor (335 aa).

A signal peptide spans 1–22 (MGHPPLLPLLLLLHTCVPASWG). UPAR/Ly6 domains follow at residues 23-114 (LRCM…RSRY), 115-213 (LECI…PQNG), and 214-305 (RQCY…YRSG). 3 disulfide bridges follow: cysteine 25/cysteine 46, cysteine 28/cysteine 34, and cysteine 39/cysteine 67. N-linked (GlcNAc...) asparagine glycosylation is present at asparagine 74. Disulfide bonds link cysteine 93–cysteine 98, cysteine 117–cysteine 144, cysteine 120–cysteine 127, cysteine 137–cysteine 169, cysteine 175–cysteine 192, cysteine 193–cysteine 198, cysteine 216–cysteine 244, cysteine 219–cysteine 227, cysteine 237–cysteine 263, cysteine 269–cysteine 287, and cysteine 288–cysteine 293. N-linked (GlcNAc...) asparagine glycosylation occurs at asparagine 124. N-linked (GlcNAc...) asparagine glycans are attached at residues asparagine 184, asparagine 194, asparagine 222, and asparagine 255. Glycine 305 is lipidated: GPI-anchor amidated glycine. Positions 306–335 (AAPQPGPAHLSLTITLLMTARLWGGTLLWT) are cleaved as a propeptide — removed in mature form.

As to quaternary structure, monomer. Interacts (via the UPAR/Ly6 domains) with SRPX2. Interacts with MRC2. Interacts with FAP (seprase); the interaction occurs at the cell surface of invadopodia membrane. Interacts with SORL1 (via N-terminal ectodomain); this interaction decreases PLAUR internalization. The ternary complex composed of PLAUR-PLAU-SERPINE1 also interacts with SORL1. Interacts with CD82; this interaction prevents PLAUR from binding to its high affinity ligand PLAU.

It is found in the cell membrane. Its subcellular location is the cell projection. The protein localises to the invadopodium membrane. In terms of biological role, acts as a receptor for urokinase plasminogen activator. Plays a role in localizing and promoting plasmin formation. Mediates the proteolysis-independent signal transduction activation effects of U-PA. It is subject to negative-feedback regulation by U-PA which cleaves it into an inactive form. This Pan troglodytes (Chimpanzee) protein is Urokinase plasminogen activator surface receptor (PLAUR).